The following is a 607-amino-acid chain: Zinc finger protein 750 (607 aa).

The CCHC-type zinc-finger motif lies at 25–51 (YQCFQCPFTCNIKSHLFNHMKYNLCKN). 4 residues coordinate Zn(2+): Cys-27, Cys-30, His-43, and Cys-49. The span at 60-78 (MEQTGKASRASQHSPAFSH) shows a compositional bias: polar residues. Disordered stretches follow at residues 60-133 (MEQT…DKSE), 318-467 (RAVQ…SSQE), 482-511 (QALP…QDLE), and 575-607 (GQKR…SQNC). Composition is skewed to basic and acidic residues over residues 79-133 (NSKE…DKSE) and 318-334 (RAVQ…RESP). The span at 369-380 (HSGSQSHIISGS) shows a compositional bias: low complexity. The span at 421-432 (DKEEDEETEEEI) shows a compositional bias: acidic residues. Basic and acidic residues predominate over residues 452 to 462 (HYPDRELHYDS). A compositionally biased stretch (polar residues) spans 496–507 (ISNAEVSTTESP). Basic residues predominate over residues 579-592 (ANNRPLRHTNKRAK).

The protein resides in the nucleus. Transcription factor involved in epidermis differentiation. The polypeptide is Zinc finger protein 750 (znf750) (Danio rerio (Zebrafish)).